We begin with the raw amino-acid sequence, 479 residues long: Putative F-box protein At1g67390 (479 aa).

One can recognise an F-box domain in the interval 40–88 (DDRISKLPDDVLVMILASLSTEDALKTSVLSTRWKNVWKQVPYLHFDLL).

In Arabidopsis thaliana (Mouse-ear cress), this protein is Putative F-box protein At1g67390.